Here is an 85-residue protein sequence, read N- to C-terminus: Omega-conotoxin-like Am6.5 (85 aa).

The first 19 residues, 1 to 19 (MCILIVAVLFLTAWTFVMA), serve as a signal peptide directing secretion. Positions 20–53 (DDPRDEPDTVVRGGKLFSRARDEMNPAASKLNER) are excised as a propeptide. 3 disulfides stabilise this stretch: Cys55/Cys73, Cys62/Cys77, and Cys72/Cys81. The residue at position 84 (Gln84) is a Glutamine amide.

The protein belongs to the conotoxin O1 family. Post-translationally, is not hydroxylated. As to expression, expressed by the venom duct.

Its subcellular location is the secreted. Omega-conotoxins act at presynaptic membranes, they bind and block voltage-gated calcium channels (Cav). In Conus amadis (Amadis cone), this protein is Omega-conotoxin-like Am6.5.